A 429-amino-acid polypeptide reads, in one-letter code: MIDINLIRDPKTREKVVESEKKRFRDGLAVGKAYELDRKRIEMNFRLDQINTRINQLNREIKSGYRQGKNKEDGDLSEKVAEIKGLSDEAKGLRDDVKAVEDELNKVMKGIGNIISPSVVVSNDEKDNPIVRSYRSSRNMQKNPRPFCVLMKDFTHSVAGAKVMGHRGYYLSGKMARLAQALTRYAIDFLENKGYTYIQTPVMLRRDVMRKTSQLSDFDDQLYKVEDDLYLIATSEQSLAALYMDERMVPQEVPKKFCGQSLCFRKEAGAHGKDNAGLFRVHQFEKIEQFVICGPEESQKYHEEMIKACEEFYQSLDISYNVVGIVSGELNDAAAIKYDLEAYFPSAEKYRELVSCSNCTDYQSRELEIRYGVVKENNRKIYVHLLNGTMCAVQRALCCIVENYQTGDGIAIPDVLQGYFGGDLIELGP.

Residue 234–236 (TSE) participates in L-serine binding. ATP-binding positions include 265–267 (RKE) and V281. An L-serine-binding site is contributed by E288. 352–355 (ELVS) provides a ligand contact to ATP. L-serine is bound at residue T389.

The protein belongs to the class-II aminoacyl-tRNA synthetase family. Type-1 seryl-tRNA synthetase subfamily. In terms of assembly, homodimer. The tRNA molecule probably binds across the dimer.

It catalyses the reaction tRNA(Ser) + L-serine + ATP = L-seryl-tRNA(Ser) + AMP + diphosphate + H(+). The enzyme catalyses tRNA(Sec) + L-serine + ATP = L-seryl-tRNA(Sec) + AMP + diphosphate + H(+). It participates in aminoacyl-tRNA biosynthesis; selenocysteinyl-tRNA(Sec) biosynthesis; L-seryl-tRNA(Sec) from L-serine and tRNA(Sec): step 1/1. Catalyzes the attachment of serine to tRNA(Ser). Is also probably able to aminoacylate tRNA(Sec) with serine, to form the misacylated tRNA L-seryl-tRNA(Sec), which will be further converted into selenocysteinyl-tRNA(Sec). The chain is Serine--tRNA ligase from Encephalitozoon cuniculi (strain GB-M1) (Microsporidian parasite).